A 418-amino-acid chain; its full sequence is Tyrosine--tRNA ligase (418 aa).

L-tyrosine is bound at residue Tyr-34. The 'HIGH' region signature appears at 39 to 48 (PTADSLHLGH). L-tyrosine contacts are provided by Tyr-169 and Gln-173. Positions 229-233 (KFGKS) match the 'KMSKS' region motif. Lys-232 is a binding site for ATP. The 67-residue stretch at 352–418 (LNIVDMLVTA…GKKKYAVLTY (67 aa)) folds into the S4 RNA-binding domain.

This sequence belongs to the class-I aminoacyl-tRNA synthetase family. TyrS type 1 subfamily. Homodimer.

It is found in the cytoplasm. It catalyses the reaction tRNA(Tyr) + L-tyrosine + ATP = L-tyrosyl-tRNA(Tyr) + AMP + diphosphate + H(+). Functionally, catalyzes the attachment of tyrosine to tRNA(Tyr) in a two-step reaction: tyrosine is first activated by ATP to form Tyr-AMP and then transferred to the acceptor end of tRNA(Tyr). The chain is Tyrosine--tRNA ligase from Streptococcus equi subsp. equi (strain 4047).